The primary structure comprises 223 residues: Expansin-B6 (223 aa).

Residues 16–124 enclose the Expansin-like EG45 domain; the sequence is GGACGFAVAN…RRVECLYRRT (109 aa). 3 disulfide bridges follow: Cys-19-Cys-46, Cys-49-Cys-119, and Cys-54-Cys-60. In terms of domain architecture, Expansin-like CBD spans 137-218; the sequence is YYISFVVEYE…NWKPNETYRS (82 aa). N-linked (GlcNAc...) asparagine glycosylation is present at Asn-213.

It belongs to the expansin family. Expansin B subfamily.

The protein resides in the secreted. It is found in the cell wall. The protein localises to the membrane. May cause loosening and extension of plant cell walls by disrupting non-covalent bonding between cellulose microfibrils and matrix glucans. The polypeptide is Expansin-B6 (Arabidopsis thaliana (Mouse-ear cress)).